The sequence spans 316 residues: Methionyl-tRNA formyltransferase (316 aa).

Ser109 to Pro112 serves as a coordination point for (6S)-5,6,7,8-tetrahydrofolate.

This sequence belongs to the Fmt family.

It carries out the reaction L-methionyl-tRNA(fMet) + (6R)-10-formyltetrahydrofolate = N-formyl-L-methionyl-tRNA(fMet) + (6S)-5,6,7,8-tetrahydrofolate + H(+). In terms of biological role, attaches a formyl group to the free amino group of methionyl-tRNA(fMet). The formyl group appears to play a dual role in the initiator identity of N-formylmethionyl-tRNA by promoting its recognition by IF2 and preventing the misappropriation of this tRNA by the elongation apparatus. The polypeptide is Methionyl-tRNA formyltransferase (Idiomarina loihiensis (strain ATCC BAA-735 / DSM 15497 / L2-TR)).